A 349-amino-acid polypeptide reads, in one-letter code: Putative phytanoyl-CoA dioxygenase (349 aa).

Residues K118 and 169 to 171 contribute to the 2-oxoglutarate site; that span reads HLD. Residues H169 and D171 each contribute to the Fe cation site.

Belongs to the PhyH family. Fe cation serves as cofactor. Requires L-ascorbate as cofactor.

It carries out the reaction phytanoyl-CoA + 2-oxoglutarate + O2 = 2-hydroxyphytanoyl-CoA + succinate + CO2. Its pathway is lipid metabolism; fatty acid metabolism. In terms of biological role, converts phytanoyl-CoA to 2-hydroxyphytanoyl-CoA. The chain is Putative phytanoyl-CoA dioxygenase from Dictyostelium discoideum (Social amoeba).